The primary structure comprises 679 residues: MGDLPGGGGGAAGGAGAAGGGGGGGNGAAGSSSSGGGASGSGGGGPGSSGLPTTNGLGVAGTAGPNVDRPPSPARLSHTSEKHPKVTLTELNMLRRHRELCDVVLNVGGRKIFAHRVILSACSSYFCAMFTGELEESRQTEVTIRDIDENAMELLIDFCYTAHIIVEESNVQTLLPAACLLQLVEIQDICCEFLKRQLDPTNCLGIRAFADTHSCRELLRIADKFTQHNFQEVMESEEFLLLPVSQLVDIICSDELNVRSEEQVFNAVMSWLKYNVAERRQHLAQVLQHVRLPLLSPKFLVGTVGSDLLVRSDEACRDLVDEAKNYLLLPQERPLMQGPRTRPRKPTRRGEVLFAVGGWCSGDAIASVERFDPQTNDWKMVAPMSKRRCGVGVAVLNDLLYAVGGHDGQSYLNSIERYDPQTNQWSCDVAPTTSCRTSVGVAVLDGFLYAVGGQDGVQCLNHVERYDPKDNKWGKVAPMTTRRLGVAVAVLGGYLYAIGGSDGQCPLNTVERYDPRQNKWVAVNPMSTRRKHLGCAVFNNYIYAVGGRDDCMELSSAERYNPLTNTWSPIVAMTSRRSGVGLAVVNGQLYAVGGFDGSAYLKTIEVYDPETNQWRLCGCMNYRRLGGGVGVMRAPQTENYMWCDNNSSNNNNNNYNLKHQQQQPQQQQQQQQQQTQQQL.

Gly residues predominate over residues 1–48 (MGDLPGGGGGAAGGAGAAGGGGGGGNGAAGSSSSGGGASGSGGGGPGS). A disordered region spans residues 1-84 (MGDLPGGGGG…RLSHTSEKHP (84 aa)). The BTB domain occupies 101–168 (CDVVLNVGGR…CYTAHIIVEE (68 aa)). The BACK domain maps to 203–305 (CLGIRAFADT…SPKFLVGTVG (103 aa)). Kelch repeat units follow at residues 352–398 (VLFA…VLND), 400–446 (LYAV…VLDG), 447–493 (FLYA…VLGG), 495–540 (LYAI…VFNN), 542–587 (IYAV…VVNG), and 588–634 (QLYA…VMRA). Residues 643-679 (CDNNSSNNNNNNYNLKHQQQQPQQQQQQQQQQTQQQL) form a disordered region. Positions 645–679 (NNSSNNNNNNYNLKHQQQQPQQQQQQQQQQTQQQL) are enriched in low complexity.

Its pathway is protein modification; protein ubiquitination. In terms of biological role, probable substrate-specific adapter of an E3 ubiquitin-protein ligase complex which mediates the ubiquitination and subsequent proteasomal degradation of target proteins. May have a role in synapse differentiation and growth. This is Kelch-like protein diablo from Drosophila willistoni (Fruit fly).